A 619-amino-acid chain; its full sequence is Chaperone protein HscA homolog (619 aa).

The protein belongs to the heat shock protein 70 family.

Chaperone involved in the maturation of iron-sulfur cluster-containing proteins. Has a low intrinsic ATPase activity which is markedly stimulated by HscB. In Azotobacter vinelandii, this protein is Chaperone protein HscA homolog.